A 366-amino-acid chain; its full sequence is Isocitrate dehydrogenase [NAD] subunit alpha, mitochondrial (366 aa).

The N-terminal 27 residues, 1 to 27, are a transit peptide targeting the mitochondrion; sequence MAGPAWISKVSRLLGAFHNQKQVTRGF. Lysine 77 carries the N6-succinyllysine modification. Threonine 101 carries the phosphothreonine modification. Residues arginine 115, arginine 125, and arginine 146 each contribute to the substrate site. N6-acetyllysine is present on lysine 223. Residues aspartate 233, aspartate 257, and aspartate 261 each coordinate Mg(2+). Lysine 343 is subject to N6-acetyllysine; alternate. N6-succinyllysine; alternate is present on lysine 343. Residue lysine 350 is modified to N6-succinyllysine.

It belongs to the isocitrate and isopropylmalate dehydrogenases family. Heterooligomer of subunits alpha (IDH3A), beta (IDH3B), and gamma (IDH3G) in the apparent ratio of 2:1:1. The heterodimer containing one IDH3A and one IDH3B subunit and the heterodimer containing one IDH3A and one IDH3G subunit assemble into a heterotetramer (which contains two subunits of IDH3A, one of IDH3B and one of IDH3G) and further into the heterooctamer. Mg(2+) is required as a cofactor. Mn(2+) serves as cofactor.

Its subcellular location is the mitochondrion. It carries out the reaction D-threo-isocitrate + NAD(+) = 2-oxoglutarate + CO2 + NADH. The heterotetramer and the heterodimer composed of IDH3A and IDH3G subunits can be allosterically activated by citrate (CIT) or/and ADP, and the two activators can act independently or synergistically. The heterodimer composed of IDH3A and IDH3B subunits cannot be allosterically regulated and the allosteric regulation of the heterotetramer is through the IDH3G subunit and not the IDH3B subunit. The IDH3G subunit contains the allosteric site which consists of a CIT-binding site and an ADP-binding site, and the binding of CIT and ADP causes conformational changes at the allosteric site which are transmitted to the active site in the catalytic subunit (IDH3A) through a cascade of conformational changes at the heterodimer interface, leading to stabilization of the isocitrate-binding at the active site and thus activation of the enzyme. ATP can activate the heterotetramer and the heterodimer composed of IDH3A and IDH3G subunits at low concentrations but inhibits their activities at high concentrations, whereas ATP exhibits only inhibitory effect on the heterodimer composed of IDH3A and IDH3B subunits. In terms of biological role, catalytic subunit of the enzyme which catalyzes the decarboxylation of isocitrate (ICT) into alpha-ketoglutarate. The heterodimer composed of the alpha (IDH3A) and beta (IDH3B) subunits and the heterodimer composed of the alpha (IDH3A) and gamma (IDH3G) subunits, have considerable basal activity but the full activity of the heterotetramer (containing two subunits of IDH3A, one of IDH3B and one of IDH3G) requires the assembly and cooperative function of both heterodimers. The polypeptide is Isocitrate dehydrogenase [NAD] subunit alpha, mitochondrial (Bos taurus (Bovine)).